A 194-amino-acid chain; its full sequence is uncharacterized protein (194 aa).

Residues 77–92 (QTQPQHQTLSQHLPQT) show a composition bias toward polar residues. A disordered region spans residues 77–96 (QTQPQHQTLSQHLPQTHHTD). A helical transmembrane segment spans residues 169-189 (FWEILLLIILIAVLVYGIYWL).

The protein localises to the host membrane. It is found in the virion. This is an uncharacterized protein from Acanthamoeba polyphaga (Amoeba).